We begin with the raw amino-acid sequence, 266 residues long: uncharacterized protein (266 aa).

Residue S176 is modified to Phosphoserine. Phosphothreonine is present on T178.

This is an uncharacterized protein from Schizosaccharomyces pombe (strain 972 / ATCC 24843) (Fission yeast).